Consider the following 490-residue polypeptide: Glutathione reductase (490 aa).

FAD is bound by residues Ser19 and Gly20. Ser19 serves as a coordination point for glutathione. Glutathione is bound at residue Arg26. FAD contacts are provided by Glu39, Thr48, Cys49, and Lys57. Cys49 and Cys54 are disulfide-bonded. Tyr110 contributes to the glutathione binding site. Residue Ala126 coordinates FAD. NADP(+) contacts are provided by Ala208, Ile211, Glu214, Arg231, and Arg237. Residue Ser246 participates in glutathione binding. Gly297 is a binding site for NADP(+). Residue Asp337 participates in FAD binding. Glu343 serves as a coordination point for NADP(+). Thr345 serves as a coordination point for FAD. Arg353 lines the glutathione pocket. Val379 is a binding site for NADP(+). Position 432 (Lys432) interacts with glutathione. His479 contacts FAD. His479 (proton acceptor) is an active-site residue.

It belongs to the class-I pyridine nucleotide-disulfide oxidoreductase family. In terms of assembly, homodimer. It depends on FAD as a cofactor.

It localises to the cytoplasm. It is found in the mitochondrion. It catalyses the reaction 2 glutathione + NADP(+) = glutathione disulfide + NADPH + H(+). Functionally, catalyzes the reduction of glutathione disulfide (GSSG) to reduced glutathione (GSH). Constitutes the major mechanism to maintain a high GSH:GSSG ratio in the cytosol. This chain is Glutathione reductase (GLR1), found in Debaryomyces hansenii (strain ATCC 36239 / CBS 767 / BCRC 21394 / JCM 1990 / NBRC 0083 / IGC 2968) (Yeast).